Reading from the N-terminus, the 228-residue chain is L-ribulose-5-phosphate 4-epimerase UlaF (228 aa).

Substrate-binding positions include Gly-26 to Asn-27, Ser-43 to Gly-44, and Ser-72 to Ser-73. Residues Asp-74, His-93, and His-95 each coordinate Zn(2+). Asp-118 (proton donor/acceptor) is an active-site residue. His-167 contacts Zn(2+). Residue Tyr-225 is the Proton donor/acceptor of the active site.

It belongs to the aldolase class II family. AraD/FucA subfamily. Zn(2+) serves as cofactor.

The enzyme catalyses L-ribulose 5-phosphate = D-xylulose 5-phosphate. The protein operates within cofactor degradation; L-ascorbate degradation; D-xylulose 5-phosphate from L-ascorbate: step 4/4. In terms of biological role, catalyzes the isomerization of L-ribulose 5-phosphate to D-xylulose 5-phosphate. Is involved in the anaerobic L-ascorbate utilization. This chain is L-ribulose-5-phosphate 4-epimerase UlaF, found in Escherichia coli (strain K12 / MC4100 / BW2952).